Here is a 147-residue protein sequence, read N- to C-terminus: Augurin (147 aa).

A signal peptide spans 1 to 31 (MANSSARPAFLVMTALALLLLLCVGPGGISG). Propeptides lie at residues 32 to 68 (NKLK…LRRP) and 132 to 147 (SAHS…YDDY).

The protein belongs to the augurin family.

Its subcellular location is the secreted. The protein resides in the cytoplasm. It is found in the apical cell membrane. In terms of biological role, probable hormone that may attenuate cell proliferation and induce senescence of oligodendrocyte and neural precursor cells in the central nervous system. ECRG4-induced senescence is characterized by G1 arrest, RB1 dephosphorylation and accelerated CCND1 and CCND3 proteasomal degradation. This chain is Augurin, found in Bos taurus (Bovine).